Reading from the N-terminus, the 209-residue chain is Large ribosomal subunit protein uL3 (209 aa).

Positions 141–164 (RAVGSMGGSSDPSRTFKSKKMPGH) are disordered.

Belongs to the universal ribosomal protein uL3 family. As to quaternary structure, part of the 50S ribosomal subunit. Forms a cluster with proteins L14 and L19.

One of the primary rRNA binding proteins, it binds directly near the 3'-end of the 23S rRNA, where it nucleates assembly of the 50S subunit. This is Large ribosomal subunit protein uL3 from Clostridium acetobutylicum (strain ATCC 824 / DSM 792 / JCM 1419 / IAM 19013 / LMG 5710 / NBRC 13948 / NRRL B-527 / VKM B-1787 / 2291 / W).